A 316-amino-acid polypeptide reads, in one-letter code: Beta-ketoacyl-[acyl-carrier-protein] synthase III (316 aa).

Residues Cys112 and His243 contribute to the active site. The tract at residues 244-248 is ACP-binding; it reads QANLR. The active site involves Asn273.

The protein belongs to the thiolase-like superfamily. FabH family. In terms of assembly, homodimer.

The protein resides in the cytoplasm. The enzyme catalyses malonyl-[ACP] + acetyl-CoA + H(+) = 3-oxobutanoyl-[ACP] + CO2 + CoA. Its pathway is lipid metabolism; fatty acid biosynthesis. Its function is as follows. Catalyzes the condensation reaction of fatty acid synthesis by the addition to an acyl acceptor of two carbons from malonyl-ACP. Catalyzes the first condensation reaction which initiates fatty acid synthesis and may therefore play a role in governing the total rate of fatty acid production. Possesses both acetoacetyl-ACP synthase and acetyl transacylase activities. Its substrate specificity determines the biosynthesis of branched-chain and/or straight-chain of fatty acids. This Yersinia pestis (strain Pestoides F) protein is Beta-ketoacyl-[acyl-carrier-protein] synthase III.